Here is a 132-residue protein sequence, read N- to C-terminus: MIIIIKIRINIHIIILTIIIIKGTINLRMSIVNQNKIHITKKQGIIMMMMMMMKILKEIKNLFDLDIMVIHIGMIKFNLVEIVQKVAVIQKVHISHYILEQIDMVDEMIIHDFKHVDDPMVIVKICFLTFLM.

In terms of biological role, FS800 is likely to have some function in the production or maintenance of the schistosome egg. It may have a function unrelated to eggshell formation. The sequence is that of Female-specific protein 800 from Schistosoma mansoni (Blood fluke).